The following is a 213-amino-acid chain: Methylthioribulose-1-phosphate dehydratase (213 aa).

Residues H97 and H99 each coordinate Zn(2+).

The protein belongs to the aldolase class II family. MtnB subfamily. In terms of assembly, homotetramer. Zn(2+) serves as cofactor.

It catalyses the reaction 5-(methylsulfanyl)-D-ribulose 1-phosphate = 5-methylsulfanyl-2,3-dioxopentyl phosphate + H2O. It participates in amino-acid biosynthesis; L-methionine biosynthesis via salvage pathway; L-methionine from S-methyl-5-thio-alpha-D-ribose 1-phosphate: step 2/6. Catalyzes the dehydration of methylthioribulose-1-phosphate (MTRu-1-P) into 2,3-diketo-5-methylthiopentyl-1-phosphate (DK-MTP-1-P). In Geobacillus sp. (strain WCH70), this protein is Methylthioribulose-1-phosphate dehydratase.